The sequence spans 373 residues: 2-aminoethylphosphonate--pyruvate transaminase (373 aa).

K191 is modified (N6-(pyridoxal phosphate)lysine).

The protein belongs to the class-V pyridoxal-phosphate-dependent aminotransferase family. PhnW subfamily. In terms of assembly, homodimer. It depends on pyridoxal 5'-phosphate as a cofactor.

It carries out the reaction (2-aminoethyl)phosphonate + pyruvate = phosphonoacetaldehyde + L-alanine. In terms of biological role, involved in phosphonate degradation. The polypeptide is 2-aminoethylphosphonate--pyruvate transaminase (Burkholderia ambifaria (strain MC40-6)).